The sequence spans 104 residues: Large ribosomal subunit protein uL24 (104 aa).

This sequence belongs to the universal ribosomal protein uL24 family. In terms of assembly, part of the 50S ribosomal subunit.

Its function is as follows. One of two assembly initiator proteins, it binds directly to the 5'-end of the 23S rRNA, where it nucleates assembly of the 50S subunit. Functionally, one of the proteins that surrounds the polypeptide exit tunnel on the outside of the subunit. The chain is Large ribosomal subunit protein uL24 from Alteromonas mediterranea (strain DSM 17117 / CIP 110805 / LMG 28347 / Deep ecotype).